Consider the following 263-residue polypeptide: MTHPQPFIAVIPARLASTRLPNKPLADLGGKPMVVRVAERAREAGAQQVLVASDAQSVLDAARDHGFEAVLTRADHPSGTDRLAEVAAAFGWRDDTVVVNVQGDEPLIDPVLVRDVASHLAAHPACAIATAAHPIHDAADVFNPNVVKVALDAQSVALYFSRAPIPWSRDAYQPHWPDVAAMPAPAFPVYRHIGLYAYRARFLRTYPSLAQAPIEQAEQLEQLRALWHGERIAVLITESAPEAGIDTPADLARVQALFQPGSK.

Belongs to the KdsB family.

The protein resides in the cytoplasm. It carries out the reaction 3-deoxy-alpha-D-manno-oct-2-ulosonate + CTP = CMP-3-deoxy-beta-D-manno-octulosonate + diphosphate. It functions in the pathway nucleotide-sugar biosynthesis; CMP-3-deoxy-D-manno-octulosonate biosynthesis; CMP-3-deoxy-D-manno-octulosonate from 3-deoxy-D-manno-octulosonate and CTP: step 1/1. It participates in bacterial outer membrane biogenesis; lipopolysaccharide biosynthesis. Its function is as follows. Activates KDO (a required 8-carbon sugar) for incorporation into bacterial lipopolysaccharide in Gram-negative bacteria. In Burkholderia cenocepacia (strain ATCC BAA-245 / DSM 16553 / LMG 16656 / NCTC 13227 / J2315 / CF5610) (Burkholderia cepacia (strain J2315)), this protein is 3-deoxy-manno-octulosonate cytidylyltransferase.